A 74-amino-acid chain; its full sequence is U-actitoxin-Bgr3a (74 aa).

The signal sequence occupies residues methionine 1–alanine 21. The propeptide occupies alanine 22–threonine 29. 3 disulfide bridges follow: cysteine 35–cysteine 68, cysteine 37–cysteine 61, and cysteine 51–cysteine 69.

Belongs to the sea anemone type 3 (BDS) potassium channel toxin family.

It localises to the secreted. It is found in the nematocyst. Functionally, potently and selectively inhibits voltage-gated potassium channels Kv11/KCNH/ERG. Acts as a gating-modifier toxin that shifts the voltage-dependence of ERG activation in the positive direction and suppresses its current amplitudes elicited by strong depolarizing pulses that maximally activate the channels. This chain is U-actitoxin-Bgr3a, found in Bunodosoma granuliferum (Red warty sea anemone).